Here is a 345-residue protein sequence, read N- to C-terminus: uncharacterized protein (345 aa).

This is an uncharacterized protein from Archaeoglobus fulgidus (strain ATCC 49558 / DSM 4304 / JCM 9628 / NBRC 100126 / VC-16).